Consider the following 102-residue polypeptide: Protein CASC2, isoform 3 (102 aa).

In terms of tissue distribution, expressed in normal and neoplastic endometrial tissues.

May act as a potential tumor suppressor. The protein is Protein CASC2, isoform 3 (CASC2) of Homo sapiens (Human).